We begin with the raw amino-acid sequence, 199 residues long: dTTP/UTP pyrophosphatase (199 aa).

Asp-79 (proton acceptor) is an active-site residue.

It belongs to the Maf family. YhdE subfamily. It depends on a divalent metal cation as a cofactor.

The protein resides in the cytoplasm. It carries out the reaction dTTP + H2O = dTMP + diphosphate + H(+). The enzyme catalyses UTP + H2O = UMP + diphosphate + H(+). In terms of biological role, nucleoside triphosphate pyrophosphatase that hydrolyzes dTTP and UTP. May have a dual role in cell division arrest and in preventing the incorporation of modified nucleotides into cellular nucleic acids. The protein is dTTP/UTP pyrophosphatase of Porphyromonas gingivalis (strain ATCC 33277 / DSM 20709 / CIP 103683 / JCM 12257 / NCTC 11834 / 2561).